The primary structure comprises 328 residues: Sulfate adenylyltransferase subunit 2 (328 aa).

The tract at residues 309–328 (RAIDKDQTASMEKKKQEGYF) is disordered.

The protein belongs to the PAPS reductase family. CysD subfamily. In terms of assembly, heterodimer composed of CysD, the smaller subunit, and CysN.

It carries out the reaction sulfate + ATP + H(+) = adenosine 5'-phosphosulfate + diphosphate. It participates in sulfur metabolism; hydrogen sulfide biosynthesis; sulfite from sulfate: step 1/3. In terms of biological role, with CysN forms the ATP sulfurylase (ATPS) that catalyzes the adenylation of sulfate producing adenosine 5'-phosphosulfate (APS) and diphosphate, the first enzymatic step in sulfur assimilation pathway. APS synthesis involves the formation of a high-energy phosphoric-sulfuric acid anhydride bond driven by GTP hydrolysis by CysN coupled to ATP hydrolysis by CysD. The protein is Sulfate adenylyltransferase subunit 2 of Hyphomonas neptunium (strain ATCC 15444).